Reading from the N-terminus, the 404-residue chain is RNA exonuclease 3 (404 aa).

In terms of domain architecture, Exonuclease spans 243–389 (VLSLDCEMAF…QDAIATMDVV (147 aa)).

It belongs to the REXO1/REXO3 family.

The protein localises to the cytoplasm. Its subcellular location is the nucleus. Its function is as follows. 3' to 5' exoribonuclease required for proper 3' end maturation of MRP RNA and of the U5L snRNA. In Saccharomyces cerevisiae (strain ATCC 204508 / S288c) (Baker's yeast), this protein is RNA exonuclease 3 (REX3).